A 424-amino-acid chain; its full sequence is Imidazolonepropionase (424 aa).

The Fe(3+) site is built by histidine 85 and histidine 87. Zn(2+)-binding residues include histidine 85 and histidine 87. Residues arginine 94, tyrosine 157, and histidine 190 each coordinate 4-imidazolone-5-propanoate. Tyrosine 157 serves as a coordination point for N-formimidoyl-L-glutamate. Histidine 255 lines the Fe(3+) pocket. Histidine 255 is a binding site for Zn(2+). A 4-imidazolone-5-propanoate-binding site is contributed by glutamate 258. Aspartate 329 is a binding site for Fe(3+). Aspartate 329 contacts Zn(2+). Residues asparagine 331 and glycine 333 each coordinate N-formimidoyl-L-glutamate. Serine 334 serves as a coordination point for 4-imidazolone-5-propanoate.

It belongs to the metallo-dependent hydrolases superfamily. HutI family. Zn(2+) is required as a cofactor. Fe(3+) serves as cofactor.

Its subcellular location is the cytoplasm. It carries out the reaction 4-imidazolone-5-propanoate + H2O = N-formimidoyl-L-glutamate. Its pathway is amino-acid degradation; L-histidine degradation into L-glutamate; N-formimidoyl-L-glutamate from L-histidine: step 3/3. Catalyzes the hydrolytic cleavage of the carbon-nitrogen bond in imidazolone-5-propanoate to yield N-formimidoyl-L-glutamate. It is the third step in the universal histidine degradation pathway. This chain is Imidazolonepropionase, found in Brevibacillus brevis (strain 47 / JCM 6285 / NBRC 100599).